The primary structure comprises 427 residues: Lipophilic envelope-spanning tunnel protein A (427 aa).

Residues 1–75 are Cytoplasmic-facing; sequence MALNTPQITP…LTRLAAMAFT (75 aa). Residues 76 to 96 form a helical membrane-spanning segment; that stretch reads MLLLMPFAWGEPLLHIWLLGI. Over 97–120 the chain is Periplasmic; that stretch reads RIDANVMQGIWQMTKQGDAITGSM. The chain crosses the membrane as a helical span at residues 121 to 141; sequence VFFCVIGAPLILVTSIAYLWF. Residues 142–269 lie on the Cytoplasmic side of the membrane; the sequence is GNRLGMNLRP…RHSLQKCWAA (128 aa). A helical transmembrane segment spans residues 270–290; that stretch reads LLASIVLLLPANLLPISIIYL. Over 291–310 the chain is Periplasmic; that stretch reads NGGRQEDTILSGIMSLASSN. Residues 311-331 form a helical membrane-spanning segment; sequence IAVAGIVFIASILVPFTKVIV. The Cytoplasmic portion of the chain corresponds to 332–350; sequence MFTLLLSIHFKCQQGLRTR. A helical transmembrane segment spans residues 351–371; it reads ILLLRMVTWIGRWSMLDLFVI. At 372 to 382 the chain is on the periplasmic side; the sequence is SLTMSLINRDQ. A helical transmembrane segment spans residues 383–403; sequence ILAFTMGPAAFYFGAAVILTI. The Cytoplasmic segment spans residues 404-427; that stretch reads LAVEWLDSRLLWDAHESGNARFDD.

It belongs to the PqiA family. In terms of assembly, may interact with LetB in the inner membrane.

It is found in the cell inner membrane. Could be part, together with LetB, of a system that transports lipids between the inner membrane and the outer membrane. Contributes to membrane integrity. In Escherichia coli (strain K12), this protein is Lipophilic envelope-spanning tunnel protein A.